The chain runs to 221 residues: Small ribosomal subunit protein uS3 (221 aa).

The region spanning 39–107 (IREYIKRKLY…QVHVNIVEVK (69 aa)) is the KH type-2 domain.

Belongs to the universal ribosomal protein uS3 family. Part of the 30S ribosomal subunit. Forms a tight complex with proteins S10 and S14.

Binds the lower part of the 30S subunit head. Binds mRNA in the 70S ribosome, positioning it for translation. The chain is Small ribosomal subunit protein uS3 from Desulforamulus reducens (strain ATCC BAA-1160 / DSM 100696 / MI-1) (Desulfotomaculum reducens).